Here is a 967-residue protein sequence, read N- to C-terminus: Leucine--tRNA ligase (967 aa).

Positions 43–53 (PYLSGHLHVGH) match the 'HIGH' region motif. The 'KMSKS' region motif lies at 650-654 (KMSKS). Lys-653 contributes to the ATP binding site.

The protein belongs to the class-I aminoacyl-tRNA synthetase family.

Its subcellular location is the cytoplasm. The enzyme catalyses tRNA(Leu) + L-leucine + ATP = L-leucyl-tRNA(Leu) + AMP + diphosphate. This chain is Leucine--tRNA ligase, found in Pyrococcus horikoshii (strain ATCC 700860 / DSM 12428 / JCM 9974 / NBRC 100139 / OT-3).